The primary structure comprises 245 residues: MDNYQELAIQFAAQAVDRNEIEQWVREFAYQGFDARRVIELLKQYGGADWEKDAKKMIVLALTRGNKPRRMMMKMSKEGKATVEALINKYKLKEGNPSRDELTLSRVAAALAGRTCQALVVLSEWLPVTGTTMDGLSPAYPRHMMHPSFAGMVDPSLPGDYLRAILDAHSLYLLQFSRVINPNLRGRTKEEVAATFTQPMNAAVNSNFISHEKRREFLKAFGLVDSNGKPSAAVMAAAQAYKTAA.

Residues 1 to 71 (MDNYQELAIQ…LTRGNKPRRM (71 aa)) are essential for oligomerization. RNA is bound by residues Tyr30, Phe33, Asn66, Lys67, Arg70, Arg99, Ser105, Arg106, Arg185, and Thr195.

Belongs to the phlebovirus nucleocapsid protein family. As to quaternary structure, homodimer. Homohexamer; ring-shaped, necessary to form the nucleocapsid. Homopentamers; opened pentamers in solution. Binds to viral genomic RNA. Interacts with glycoprotein Gn; this interaction allows packaging of nucleocapsids into virions.

Its subcellular location is the virion. The protein resides in the host cytoplasm. It is found in the host nucleus. It localises to the host endoplasmic reticulum-Golgi intermediate compartment. The protein localises to the host Golgi apparatus. Functionally, encapsidates the genomic RNA, protecting it from nucleases. Displays high affinity for single-stranded nucleic acid. The encapsidated genomic RNA is termed the nucleocapsid (NC) or ribonucleoprotein. The ribonucleoprotein has a non-helical structure. Serves as template for viral transcription and replication. After replication, the nucleocapsid is recruited to the host Golgi apparatus by glycoprotein Gn for packaging into virus particles. The polypeptide is Nucleoprotein (N) (Aedes (Bovine)).